The following is an 83-amino-acid chain: Cytochrome c oxidase subunit 7A2, mitochondrial (83 aa).

The transit peptide at 1-23 directs the protein to the mitochondrion; the sequence is MLRNLLALRQIAKRTISTSSRRQ. Topologically, residues 24 to 48 are mitochondrial matrix; it reads FENKVPEKQKLFQEDNGIPVHLKGG. An N6-acetyllysine modification is found at Lys-33. Residues 49–77 traverse the membrane as a helical segment; sequence IADALLYRATLILTVGGTAYAMYELAVAS. Topologically, residues 78-83 are mitochondrial intermembrane; that stretch reads FPKKQD.

This sequence belongs to the cytochrome c oxidase VIIa family. Component of the cytochrome c oxidase (complex IV, CIV), a multisubunit enzyme composed of 14 subunits. The complex is composed of a catalytic core of 3 subunits MT-CO1, MT-CO2 and MT-CO3, encoded in the mitochondrial DNA, and 11 supernumerary subunits COX4I1 (or COX4I2), COX5A, COX5B, COX6A2 (or COX6A1), COX6B1 (or COX6B2), COX6C, COX7A1 (or COX7A2), COX7B, COX7C, COX8B and NDUFA4, which are encoded in the nuclear genome. The complex exists as a monomer or a dimer and forms supercomplexes (SCs) in the inner mitochondrial membrane with NADH-ubiquinone oxidoreductase (complex I, CI) and ubiquinol-cytochrome c oxidoreductase (cytochrome b-c1 complex, complex III, CIII), resulting in different assemblies (supercomplex SCI(1)III(2)IV(1) and megacomplex MCI(2)III(2)IV(2)). Interacts with PET100.

Its subcellular location is the mitochondrion inner membrane. It participates in energy metabolism; oxidative phosphorylation. Functionally, component of the cytochrome c oxidase, the last enzyme in the mitochondrial electron transport chain which drives oxidative phosphorylation. The respiratory chain contains 3 multisubunit complexes succinate dehydrogenase (complex II, CII), ubiquinol-cytochrome c oxidoreductase (cytochrome b-c1 complex, complex III, CIII) and cytochrome c oxidase (complex IV, CIV), that cooperate to transfer electrons derived from NADH and succinate to molecular oxygen, creating an electrochemical gradient over the inner membrane that drives transmembrane transport and the ATP synthase. Cytochrome c oxidase is the component of the respiratory chain that catalyzes the reduction of oxygen to water. Electrons originating from reduced cytochrome c in the intermembrane space (IMS) are transferred via the dinuclear copper A center (CU(A)) of subunit 2 and heme A of subunit 1 to the active site in subunit 1, a binuclear center (BNC) formed by heme A3 and copper B (CU(B)). The BNC reduces molecular oxygen to 2 water molecules using 4 electrons from cytochrome c in the IMS and 4 protons from the mitochondrial matrix. In Bos taurus (Bovine), this protein is Cytochrome c oxidase subunit 7A2, mitochondrial (COX7A2).